Consider the following 213-residue polypeptide: Orotate phosphoribosyltransferase (213 aa).

Lysine 26 is a 5-phospho-alpha-D-ribose 1-diphosphate binding site. 34 to 35 (FF) lines the orotate pocket. 5-phospho-alpha-D-ribose 1-diphosphate contacts are provided by residues 72–73 (YK), arginine 99, lysine 100, lysine 103, histidine 105, and 124–132 (DDVITAGTA). Residues threonine 128 and arginine 156 each coordinate orotate.

It belongs to the purine/pyrimidine phosphoribosyltransferase family. PyrE subfamily. In terms of assembly, homodimer. The cofactor is Mg(2+).

It catalyses the reaction orotidine 5'-phosphate + diphosphate = orotate + 5-phospho-alpha-D-ribose 1-diphosphate. It functions in the pathway pyrimidine metabolism; UMP biosynthesis via de novo pathway; UMP from orotate: step 1/2. In terms of biological role, catalyzes the transfer of a ribosyl phosphate group from 5-phosphoribose 1-diphosphate to orotate, leading to the formation of orotidine monophosphate (OMP). The chain is Orotate phosphoribosyltransferase from Vibrio vulnificus (strain CMCP6).